The primary structure comprises 508 residues: Amphoterin-induced protein 3 (508 aa).

Residues 1-19 form the signal peptide; the sequence is MAWLVLLGLLLCMLGAGSG. Residues 20–383 lie on the Extracellular side of the membrane; it reads TSDLEGVLPP…PRPEPEAFNT (364 aa). The region spanning 25 to 61 is the LRRNT domain; it reads GVLPPDPHNCPNKCVCAADVLSCAGRGLQDLPAALPA. 2 cysteine pairs are disulfide-bonded: cysteine 34–cysteine 40 and cysteine 38–cysteine 47. 6 LRR repeats span residues 62-83, 86-107, 110-131, 134-155, 158-178, and 184-207; these read TAAE…WLAP, RLRA…VFTN, GLRI…DLDG, ELEK…AFQG, MLSH…NHLH, and RLRT…AALP. The N-linked (GlcNAc...) asparagine glycan is linked to asparagine 107. The 57-residue stretch at 219 to 275 folds into the LRRCT domain; it reads NPLPCDCSLYHLLRRWHQRGLSALHDFEREYTCLAFKVAESRVRFFEHSRVFKNCSV. 3 disulfides stabilise this stretch: cysteine 223–cysteine 251, cysteine 225–cysteine 273, and cysteine 300–cysteine 352. Residues asparagine 272, asparagine 301, asparagine 362, and asparagine 368 are each glycosylated (N-linked (GlcNAc...) asparagine). An Ig-like C2-type domain is found at 279–370; the sequence is PGLELPEEEL…HNQTLEYNVS (92 aa). Residues 384 to 404 form a helical membrane-spanning segment; it reads GFTTLLGCIVGLVLVLLYLFA. At 405-508 the chain is on the cytoplasmic side; the sequence is PPCRGCCRCC…STGSEGLMMS (104 aa).

It belongs to the immunoglobulin superfamily. AMIGO family. Binds AMIGO1 or AMIGO2.

Its subcellular location is the membrane. Functionally, may mediate heterophilic cell-cell interaction. May contribute to signal transduction through its intracellular domain. In Rattus norvegicus (Rat), this protein is Amphoterin-induced protein 3.